The sequence spans 129 residues: Ig lambda-1 chain V regions MOPC 104E/RPC20/J558/S104 (129 aa).

The signal sequence occupies residues 1–19 (MAWISLILSLLALSSGAIS). Pyrrolidone carboxylic acid is present on Q20. The region spanning 20-125 (QAVVTQESAL…HWVFGGGTKL (106 aa)) is the Ig-like domain.

This is Ig lambda-1 chain V regions MOPC 104E/RPC20/J558/S104 from Mus musculus (Mouse).